The following is a 256-amino-acid chain: Acidic leucine-rich nuclear phosphoprotein 32 family member E (256 aa).

LRR repeat units lie at residues 43–64, 65–87, and 89–110; these read ELEFLSMANVQLTSLAKLPTLS, KLRKLELSDNIISGGLEVLAERC, and NLTYLNLSGNKIKDLGTVEALQ. Residues 123–161 enclose the LRRCT domain; the sequence is CEITNLEDYRDSIFDLLQQITYLDGFDQEDNEAPDSEDD. The tract at residues 147-256 is disordered; it reads GFDQEDNEAP…PEDEGEEEDD (110 aa). 2 stretches are compositionally biased toward acidic residues: residues 148-205 and 215-235; these read FDQE…EEEV and IQDEDDDDDYVEEGGDEEEEA. Residues 204–256 are ZID domain; the sequence is EVGLSYLMKEEIQDEDDDDDYVEEGGDEEEEAEGIRGEKRKRDPEDEGEEEDD. Over residues 236 to 247 the composition is skewed to basic and acidic residues; that stretch reads EGIRGEKRKRDP.

This sequence belongs to the ANP32 family. In terms of assembly, component of a SWR1-like complex. Interacts with H2A.Z/H2AZ1.

It localises to the cytoplasm. It is found in the nucleus. Functionally, histone chaperone that specifically mediates the genome-wide removal of histone H2A.Z/H2AZ1 from the nucleosome: removes H2A.Z/H2AZ1 from its normal sites of deposition, especially from enhancer and insulator regions. Not involved in deposition of H2A.Z/H2AZ1 in the nucleosome. May stabilize the evicted H2A.Z/H2AZ1-H2B dimer, thus shifting the equilibrium towards dissociation and the off-chromatin state. Inhibits activity of protein phosphatase 2A (PP2A). Does not inhibit protein phosphatase 1. May play a role in cerebellar development and synaptogenesis. The polypeptide is Acidic leucine-rich nuclear phosphoprotein 32 family member E (ANP32E) (Gallus gallus (Chicken)).